We begin with the raw amino-acid sequence, 604 residues long: Elongation factor 4 (604 aa).

The 183-residue stretch at 7-189 (KRIRNFCIIA…SVVDRVPPPA (183 aa)) folds into the tr-type G domain. Residues 19–24 (DHGKST) and 136–139 (NKID) each bind GTP.

The protein belongs to the TRAFAC class translation factor GTPase superfamily. Classic translation factor GTPase family. LepA subfamily.

The protein resides in the cell inner membrane. It catalyses the reaction GTP + H2O = GDP + phosphate + H(+). Required for accurate and efficient protein synthesis under certain stress conditions. May act as a fidelity factor of the translation reaction, by catalyzing a one-codon backward translocation of tRNAs on improperly translocated ribosomes. Back-translocation proceeds from a post-translocation (POST) complex to a pre-translocation (PRE) complex, thus giving elongation factor G a second chance to translocate the tRNAs correctly. Binds to ribosomes in a GTP-dependent manner. This is Elongation factor 4 from Synechococcus sp. (strain CC9311).